Reading from the N-terminus, the 260-residue chain is Thrombin-like enzyme flavoxobin (260 aa).

Positions Met-1–Ala-18 are cleaved as a signal peptide. A propeptide spanning residues Gln-19–Leu-24 is cleaved from the precursor. The region spanning Val-25–Ala-251 is the Peptidase S1 domain. 6 disulfides stabilise this stretch: Cys-31–Cys-165, Cys-52–Cys-68, Cys-100–Cys-258, Cys-144–Cys-212, Cys-176–Cys-191, and Cys-202–Cys-227. Residues His-67 and Asp-112 each act as charge relay system in the active site. Residue Ser-206 is the Charge relay system of the active site.

The protein belongs to the peptidase S1 family. Snake venom subfamily. As to quaternary structure, monomer. As to expression, expressed by the venom gland.

The protein resides in the secreted. The catalysed reaction is Selective cleavage of Arg-|-Xaa bond in fibrinogen, to form fibrin, and release fibrinopeptide A. The specificity of further degradation of fibrinogen varies with species origin of the enzyme.. Inhibited by alpha(2)-macroglobulin, diisopropylfluorophosphate (DFP) and PMSF. Low inhibition by tosyl-L-lysine chloromethyl ketone. Functionally, thrombin-like snake venom serine protease that clots fibrinogen (FGA) by releasing fibrinopeptide A. According to PubMed:8585090, only cleaves rabbit fibrinogen, whereas no specificity is described in PubMed:3910643 (tests done on bovine fibrinogen). Also acts as a C3 convertase that independently cleaves human C3 and kick-starts the complement cascade. Also increases urokinase-type plasminogen activator (PLAU) and plasminogen activator inhibitor (SERPINE1) in cultured bovine pulmonary artery endothelial cells. Dose-dependently inhibits collagen-induced platelet aggregation. The sequence is that of Thrombin-like enzyme flavoxobin (TLF1) from Protobothrops flavoviridis (Habu).